Consider the following 104-residue polypeptide: L-rhamnose mutarotase (104 aa).

Tyrosine 18 lines the substrate pocket. The Proton donor role is filled by histidine 22. Substrate-binding positions include tyrosine 41 and 76–77 (WW).

The protein belongs to the rhamnose mutarotase family. In terms of assembly, homodimer.

The protein localises to the cytoplasm. It catalyses the reaction alpha-L-rhamnose = beta-L-rhamnose. It functions in the pathway carbohydrate metabolism; L-rhamnose metabolism. Functionally, involved in the anomeric conversion of L-rhamnose. The protein is L-rhamnose mutarotase of Salmonella newport (strain SL254).